The primary structure comprises 463 residues: Glycine--tRNA ligase (463 aa).

Substrate is bound by residues Arg-100 and Glu-175. Residues 207–209, 217–222, 291–292, and 335–338 each bind ATP; these read RNE, FRTREF, EL, and GADR. Position 222–226 (222–226) interacts with substrate; that stretch reads FEQME. 331-335 is a substrate binding site; the sequence is EPSLG.

Belongs to the class-II aminoacyl-tRNA synthetase family. In terms of assembly, homodimer.

Its subcellular location is the cytoplasm. The enzyme catalyses tRNA(Gly) + glycine + ATP = glycyl-tRNA(Gly) + AMP + diphosphate. Catalyzes the attachment of glycine to tRNA(Gly). The chain is Glycine--tRNA ligase from Clostridium beijerinckii (strain ATCC 51743 / NCIMB 8052) (Clostridium acetobutylicum).